The sequence spans 61 residues: DNA-directed RNA polymerase subunit Rpo6 (61 aa).

Belongs to the archaeal Rpo6/eukaryotic RPB6 RNA polymerase subunit family. As to quaternary structure, part of the RNA polymerase complex.

The protein resides in the cytoplasm. The enzyme catalyses RNA(n) + a ribonucleoside 5'-triphosphate = RNA(n+1) + diphosphate. In terms of biological role, DNA-dependent RNA polymerase (RNAP) catalyzes the transcription of DNA into RNA using the four ribonucleoside triphosphates as substrates. The polypeptide is DNA-directed RNA polymerase subunit Rpo6 (Thermoplasma acidophilum (strain ATCC 25905 / DSM 1728 / JCM 9062 / NBRC 15155 / AMRC-C165)).